A 115-amino-acid chain; its full sequence is Cyclin-dependent kinase 2-associated protein 1 (115 aa).

Residues 20-25 (GSVHSP) form an interaction with CDK2AP2 region. Phosphoserine; by IKKE is present on serine 46.

This sequence belongs to the CDK2AP family. As to quaternary structure, homodimer. Component of the nucleosome remodeling and deacetylase (NuRD) repressor complex, composed of core proteins MTA1, MTA2, MTA3, RBBP4, RBBP7, HDAC1, HDAC2, MBD2, MBD3, and peripherally associated proteins CDK2AP1, CDK2AP2, GATAD2A, GATAD2B, CHD3, CHD4 and CHD5. The exact stoichiometry of the NuRD complex is unknown, and some subunits such as MBD2 and MBD3, GATAD2A and GATAD2B, and CHD3, CHD4 and CHD5 define mutually exclusive NuRD complexes. Interacts with monomeric unphosphorylated CDK2. Interacts with CDK2AP2. Interacts with GATAD2A. Interacts with HDAC1. Interacts with HDAC2. Interacts with MBD2. Interacts with MBD3. Interacts with RBBP4. Interacts with RBBP7. In terms of processing, phosphorylated in vitro by IKBKE at Ser-46.

It is found in the nucleus. Its subcellular location is the chromosome. Its function is as follows. Inhibitor of cyclin-dependent kinase CDK2. Also acts as a component of the histone deacetylase NuRD complex which participates in the remodeling of chromatin. The chain is Cyclin-dependent kinase 2-associated protein 1 (CDK2AP1) from Homo sapiens (Human).